Here is a 155-residue protein sequence, read N- to C-terminus: UPF0060 membrane protein MA_3936 (155 aa).

A run of 3 helical transmembrane segments spans residues 8–28 (LCPFFLAALFEIRGGYLICLW), 35–55 (AVFGPLGRLMLAVCGIIPTFQ), and 62–82 (VYAAHGGIFIVFSLIWDLFVD).

Belongs to the UPF0060 family.

It localises to the cell membrane. The polypeptide is UPF0060 membrane protein MA_3936 (Methanosarcina acetivorans (strain ATCC 35395 / DSM 2834 / JCM 12185 / C2A)).